We begin with the raw amino-acid sequence, 166 residues long: Regulatory protein RecX (166 aa).

This sequence belongs to the RecX family.

Its subcellular location is the cytoplasm. In terms of biological role, modulates RecA activity. The chain is Regulatory protein RecX from Salmonella paratyphi A (strain ATCC 9150 / SARB42).